The sequence spans 281 residues: Phosphatidylglycerol--prolipoprotein diacylglyceryl transferase (281 aa).

4 helical membrane passes run I23–W43, F71–Y91, W107–F127, and I133–V153. R154 is a binding site for a 1,2-diacyl-sn-glycero-3-phospho-(1'-sn-glycerol). The next 3 helical transmembrane spans lie at L189–G209, G217–F237, and L247–L267.

The protein belongs to the Lgt family.

The protein localises to the cell inner membrane. It carries out the reaction L-cysteinyl-[prolipoprotein] + a 1,2-diacyl-sn-glycero-3-phospho-(1'-sn-glycerol) = an S-1,2-diacyl-sn-glyceryl-L-cysteinyl-[prolipoprotein] + sn-glycerol 1-phosphate + H(+). The protein operates within protein modification; lipoprotein biosynthesis (diacylglyceryl transfer). Functionally, catalyzes the transfer of the diacylglyceryl group from phosphatidylglycerol to the sulfhydryl group of the N-terminal cysteine of a prolipoprotein, the first step in the formation of mature lipoproteins. This is Phosphatidylglycerol--prolipoprotein diacylglyceryl transferase from Brucella canis (strain ATCC 23365 / NCTC 10854 / RM-666).